The sequence spans 94 residues: Small ribosomal subunit protein uS19 (94 aa).

Belongs to the universal ribosomal protein uS19 family.

Functionally, protein S19 forms a complex with S13 that binds strongly to the 16S ribosomal RNA. This chain is Small ribosomal subunit protein uS19, found in Dictyoglomus thermophilum (strain ATCC 35947 / DSM 3960 / H-6-12).